Reading from the N-terminus, the 536-residue chain is Maintenance of mitochondrial morphology protein 1 (536 aa).

Residues 1-25 lie on the Lumenal side of the membrane; sequence MAGPSNQTQPPPPVLTQPSLSFTQG. Residues 26–46 form a helical membrane-spanning segment; sequence LLVGQLSVVLLIGAFIKFFIF. Topologically, residues 47–536 are cytoplasmic; the sequence is GEAPPHPSRN…GSMPDPVVVT (490 aa). Disordered regions lie at residues 52 to 135, 275 to 331, 416 to 467, and 505 to 536; these read HPSR…SHQP, GPGT…ATAA, GRTG…GGSM, and YGGA…VVVT. Composition is skewed to polar residues over residues 69–81, 88–105, and 112–121; these read YSLN…SSPR, STSN…NTRS, and YSATPTNPTS. Positions 122 to 132 are enriched in basic residues; the sequence is KHSRSRPHHSS. Residues 134–409 form the SMP-LTD domain; it reads QPESLDWFNV…EPRVQVVGLP (276 aa). Over residues 321-331 the composition is skewed to low complexity; the sequence is TNTNTAGATAA. 2 stretches are compositionally biased toward gly residues: residues 442–467 and 507–517; these read TAGG…GGSM and GAQGGGGGGGR.

It belongs to the MMM1 family. Homodimer. Component of the ER-mitochondria encounter structure (ERMES) or MDM complex, composed of MMM1, MDM10, MDM12 and MDM34. An MMM1 homodimer associates with one molecule of MDM12 on each side in a pairwise head-to-tail manner, and the SMP-LTD domains of MMM1 and MDM12 generate a continuous hydrophobic tunnel for phospholipid trafficking.

The protein resides in the endoplasmic reticulum membrane. Functionally, component of the ERMES/MDM complex, which serves as a molecular tether to connect the endoplasmic reticulum (ER) and mitochondria. Components of this complex are involved in the control of mitochondrial shape and protein biogenesis, and function in nonvesicular lipid trafficking between the ER and mitochondria. The MDM12-MMM1 subcomplex functions in the major beta-barrel assembly pathway that is responsible for biogenesis of all outer membrane beta-barrel proteins, and acts in a late step after the SAM complex. The MDM10-MDM12-MMM1 subcomplex further acts in the TOM40-specific pathway after the action of the MDM12-MMM1 complex. Essential for establishing and maintaining the structure of mitochondria and maintenance of mtDNA nucleoids. The chain is Maintenance of mitochondrial morphology protein 1 from Ajellomyces dermatitidis (strain ER-3 / ATCC MYA-2586) (Blastomyces dermatitidis).